The sequence spans 247 residues: Ribosomal RNA small subunit methyltransferase G (247 aa).

S-adenosyl-L-methionine is bound by residues G86, L91, and R154.

The protein belongs to the methyltransferase superfamily. RNA methyltransferase RsmG family.

It is found in the cytoplasm. Functionally, specifically methylates the N7 position of a guanine in 16S rRNA. In Leptospira biflexa serovar Patoc (strain Patoc 1 / Ames), this protein is Ribosomal RNA small subunit methyltransferase G.